The sequence spans 174 residues: Probable calcium-binding protein CML20 (174 aa).

A lipid anchor (N-myristoyl glycine) is attached at Gly-2. The interval 14-35 (LRRSRSRSPPPAVLDPSQSPLS) is disordered. EF-hand domains lie at 39–74 (EAEP…SVDE), 75–100 (AEEM…AVME), 102–137 (GGLD…LNLD), and 141–174 (LTAE…SKQA). Ca(2+) is bound by residues Asp-52, Asp-54, Asp-56, Glu-63, Asp-83, Asp-85, Asp-87, Glu-94, Asp-115, Asp-117, Asn-119, Glu-126, Asp-154, Asp-156, Asp-158, and Glu-165.

Functionally, potential calcium sensor. The polypeptide is Probable calcium-binding protein CML20 (CML20) (Oryza sativa subsp. japonica (Rice)).